The sequence spans 284 residues: MDAIKKKMLAMKMEKENAIDRAEQMEQKLRDVEETKNKLEEEFNNLQNKFSNLQNDFDTANEGLTEAQTKLEASEKHVAELESDTAGLNRRIQLLEEDLERSEERLQSATEKLEEASKAADESERGRKVLESRSLADDERLDGLEAQLKEAKYIAEDAERKYDEAARKLAITEVDLERAEARLEAAEAKVWELDEELHIVGNNIKTLSIQNDQASQREDSYQETIRDLTQRLKDAENRATEAERTVSKLQKEVDRLEDELLAEKERYKSISDELDSTFAELAGY.

Positions 1–284 (MDAIKKKMLA…DSTFAELAGY (284 aa)) form a coiled coil. Residues 103-131 (EERLQSATEKLEEASKAADESERGRKVLE) are disordered.

It belongs to the tropomyosin family. Homodimer.

Tropomyosin, in association with the troponin complex, plays a central role in the calcium dependent regulation of muscle contraction. This is Tropomyosin-1 from Biomphalaria glabrata (Bloodfluke planorb).